Reading from the N-terminus, the 871-residue chain is DNA mismatch repair protein MutS (871 aa).

An ATP-binding site is contributed by 620–627 (GPNMGGKS). The disordered stretch occupies residues 806-837 (HHGGLNEPKQATMELTPPPEAIPSHTEKRNPL).

It belongs to the DNA mismatch repair MutS family.

Its function is as follows. This protein is involved in the repair of mismatches in DNA. It is possible that it carries out the mismatch recognition step. This protein has a weak ATPase activity. The sequence is that of DNA mismatch repair protein MutS from Idiomarina loihiensis (strain ATCC BAA-735 / DSM 15497 / L2-TR).